Reading from the N-terminus, the 452-residue chain is MHQRALLFSALAVAANAQQVGTQTPETHPPLTWQKCTAAGSCSQQSGSVVIDANWRWLHSTKDTTNCYTGNTWNTELCPDNESCAQNCALDGADYAGTYGVTTSGSELKLSFVTGANVGSRLYLMQDDETYQHFNLLNHEFTFDVDVSNLPCGLNGALYFVAMDADGGMSKYPSNKAGAKYGTGYCDSQCPRDLKFINGMANVEGWEPSSSDKNAGVGGHGSCCPEMDIWEANSISTAVTPHPCDDVSQTMCSGDACGGTYSESRYAGTCDPDGCDFNPFRMGNESFYGPGKIVDTKSKMTVVTQFITADGTDSGALSEIKRLYVQNGKVIANSVSNVAGVSGNSITSDFCTAQKKAFGDEDIFAKHGGLSGMGKALSEMVLIMSIWDDHHSSMMWLDSTYPTDADPSKPGVARGTCEHGAGDPENVESQHPDASVTFSNIKFGPIGSTYEG.

The first 17 residues, M1–A17, serve as a signal peptide directing secretion. Residue N81 is glycosylated (N-linked (GlcNAc...) asparagine). Residue E226 is the Nucleophile of the active site. E231 serves as the catalytic Proton donor. N284 carries N-linked (GlcNAc...) asparagine glycosylation. Residues A405–H431 are disordered.

It belongs to the glycosyl hydrolase 7 (cellulase C) family.

It is found in the secreted. It carries out the reaction Hydrolysis of (1-&gt;4)-beta-D-glucosidic linkages in cellulose and cellotetraose, releasing cellobiose from the non-reducing ends of the chains.. In terms of biological role, the biological conversion of cellulose to glucose generally requires three types of hydrolytic enzymes: (1) Endoglucanases which cut internal beta-1,4-glucosidic bonds; (2) Exocellobiohydrolases that cut the disaccharide cellobiose from the non-reducing end of the cellulose polymer chain; (3) Beta-1,4-glucosidases which hydrolyze the cellobiose and other short cello-oligosaccharides to glucose. This is Probable 1,4-beta-D-glucan cellobiohydrolase A (cbhA) from Aspergillus fumigatus (strain CBS 144.89 / FGSC A1163 / CEA10) (Neosartorya fumigata).